Consider the following 89-residue polypeptide: Teretoxin Tan22.12 (89 aa).

An N-terminal signal peptide occupies residues 1–22; sequence MKVLFTLAMIVVTLCLGQRMRR.

The protein belongs to the teretoxin C (TC) superfamily. Contains 4 disulfide bonds. In terms of tissue distribution, expressed by the venom duct.

The protein localises to the secreted. The polypeptide is Teretoxin Tan22.12 (Terebra anilis (Auger snail)).